The chain runs to 258 residues: MPESRTSADGGMETSYGFREVPGGEKQDLVNQVFHKVAKRYDIMNDVMSMGMHRAWKDAMISALNPRKEPGYRVLDVAGGTGDIAFRIVEASGRQAHATVLDINGSMLGVGAERAEKKKLSGNLTFVEANAEELPFEPASFDAYTIAFGIRNVPRIDAALSEAYRVLKRGGRLLVLEFSEVDMPLLDRIYDAWSFNAIPQFGKAITGDAEPYQYLVESIRKFPNQENFAAMIRQAGFSRVTYTNYTGGIAALHSGWKL.

The interval M1–V21 is disordered. Residues T81, D102, and N130 to A131 contribute to the S-adenosyl-L-methionine site.

Belongs to the class I-like SAM-binding methyltransferase superfamily. MenG/UbiE family.

It carries out the reaction a 2-demethylmenaquinol + S-adenosyl-L-methionine = a menaquinol + S-adenosyl-L-homocysteine + H(+). The catalysed reaction is a 2-methoxy-6-(all-trans-polyprenyl)benzene-1,4-diol + S-adenosyl-L-methionine = a 5-methoxy-2-methyl-3-(all-trans-polyprenyl)benzene-1,4-diol + S-adenosyl-L-homocysteine + H(+). The protein operates within quinol/quinone metabolism; menaquinone biosynthesis; menaquinol from 1,4-dihydroxy-2-naphthoate: step 2/2. It functions in the pathway cofactor biosynthesis; ubiquinone biosynthesis. Methyltransferase required for the conversion of demethylmenaquinol (DMKH2) to menaquinol (MKH2) and the conversion of 2-polyprenyl-6-methoxy-1,4-benzoquinol (DDMQH2) to 2-polyprenyl-3-methyl-6-methoxy-1,4-benzoquinol (DMQH2). The polypeptide is Ubiquinone/menaquinone biosynthesis C-methyltransferase UbiE (Rhizobium leguminosarum bv. trifolii (strain WSM2304)).